Consider the following 548-residue polypeptide: Membrane protein insertase YidC (548 aa).

The chain crosses the membrane as a helical span at residues 6 to 26 (NLLVIALLFVSFMIWQAWEQD). The tract at residues 28–54 (NPQPQTQQTTQTTTTAAGSAADQGVPA) is disordered. Over residues 29–42 (PQPQTQQTTQTTTT) the composition is skewed to low complexity. Transmembrane regions (helical) follow at residues 350–370 (FLGN…GIMY), 424–444 (FPLI…MGSI), 458–478 (LSAQ…MFFI), and 499–519 (PVIF…YYIV).

Belongs to the OXA1/ALB3/YidC family. Type 1 subfamily. Interacts with the Sec translocase complex via SecD. Specifically interacts with transmembrane segments of nascent integral membrane proteins during membrane integration.

The protein localises to the cell inner membrane. Its function is as follows. Required for the insertion and/or proper folding and/or complex formation of integral membrane proteins into the membrane. Involved in integration of membrane proteins that insert both dependently and independently of the Sec translocase complex, as well as at least some lipoproteins. Aids folding of multispanning membrane proteins. This is Membrane protein insertase YidC from Citrobacter koseri (strain ATCC BAA-895 / CDC 4225-83 / SGSC4696).